A 263-amino-acid chain; its full sequence is Acyl-[acyl-carrier-protein]--UDP-N-acetylglucosamine O-acyltransferase (263 aa).

The protein belongs to the transferase hexapeptide repeat family. LpxA subfamily. As to quaternary structure, homotrimer.

The protein resides in the cytoplasm. It carries out the reaction a (3R)-hydroxyacyl-[ACP] + UDP-N-acetyl-alpha-D-glucosamine = a UDP-3-O-[(3R)-3-hydroxyacyl]-N-acetyl-alpha-D-glucosamine + holo-[ACP]. It participates in glycolipid biosynthesis; lipid IV(A) biosynthesis; lipid IV(A) from (3R)-3-hydroxytetradecanoyl-[acyl-carrier-protein] and UDP-N-acetyl-alpha-D-glucosamine: step 1/6. Functionally, involved in the biosynthesis of lipid A, a phosphorylated glycolipid that anchors the lipopolysaccharide to the outer membrane of the cell. The sequence is that of Acyl-[acyl-carrier-protein]--UDP-N-acetylglucosamine O-acyltransferase from Campylobacter jejuni subsp. jejuni serotype O:23/36 (strain 81-176).